The following is a 137-amino-acid chain: Probable histone H2AXa (137 aa).

The segment covering 1–10 (MSSSQGGGGR) has biased composition (gly residues). The disordered stretch occupies residues 1–21 (MSSSQGGGGRGKAKTTKAVSR). Ser134 carries the post-translational modification Phosphoserine; by ATM and ATR. The short motif at 134-135 (SQ) is the [ST]-Q motif element.

Belongs to the histone H2A family. As to quaternary structure, the nucleosome is a histone octamer containing two molecules each of H2A, H2B, H3 and H4 assembled in one H3-H4 heterotetramer and two H2A-H2B heterodimers. The octamer wraps approximately 147 bp of DNA. Interacts with numerous proteins required for DNA damage signaling and repair when phosphorylated on Ser-134. Phosphorylated to form H2AXS139ph (gamma-H2AX) in response to DNA double strand breaks (DSBs) generated by exogenous genotoxic agents and by stalled replication forks, and may also occur during meiotic recombination events. Phosphorylation can extend up to several thousand nucleosomes from the actual site of the DSB and may mark the surrounding chromatin for recruitment of proteins required for DNA damage signaling and repair. Widespread phosphorylation may also serve to amplify the damage signal or aid repair of persistent lesions. H2AXS139ph in response to ionizing radiation is mediated by ATM while defects in DNA replication induce H2AXS139ph subsequent to activation of ATR. Dephosphorylation of H2AXS139ph by PP2A is required for DNA DSB repair.

Its subcellular location is the nucleus. The protein localises to the chromosome. Functionally, variant histone H2A which replaces conventional H2A in a subset of nucleosomes. Nucleosomes wrap and compact DNA into chromatin, limiting DNA accessibility to the cellular machineries which require DNA as a template. Histones thereby play a central role in transcription regulation, DNA repair, DNA replication and chromosomal stability. DNA accessibility is regulated via a complex set of post-translational modifications of histones, also called histone code, and nucleosome remodeling. Required for checkpoint-mediated arrest of cell cycle progression in response to low doses of ionizing radiation and for efficient repair of DNA double strand breaks (DSBs) specifically when modified by C-terminal phosphorylation. This Oryza sativa subsp. indica (Rice) protein is Probable histone H2AXa.